Consider the following 41-residue polypeptide: Photosystem I reaction center subunit IX (41 aa).

A helical transmembrane segment spans residues 7-27 (YLSTAPVLLTLWMTFTAGFII).

The protein belongs to the PsaJ family.

It localises to the plastid. Its subcellular location is the chloroplast thylakoid membrane. May help in the organization of the PsaE and PsaF subunits. The polypeptide is Photosystem I reaction center subunit IX (Thalassiosira pseudonana (Marine diatom)).